The following is a 194-amino-acid chain: CMRF35-like molecule 5 (194 aa).

An N-terminal signal peptide occupies residues 1-18 (MWLSPSLLLLILPGYSIA). One can recognise an Ig-like V-type domain in the interval 19 to 125 (AKITGPTTVN…LGVKVQVTIN (107 aa)). The Extracellular segment spans residues 19 to 165 (AKITGPTTVN…LTRSPLKSTH (147 aa)). The N-linked (GlcNAc...) asparagine glycan is linked to Asn28. Cysteines 39 and 107 form a disulfide. A helical membrane pass occupies residues 166-186 (FLFLFLLELPLLLSMLGTVLW). Residues 187–194 (VNRPQRRS) lie on the Cytoplasmic side of the membrane.

It belongs to the CD300 family. Forms complexes with the CD300 family members with exception of CD300c. N-glycosylated. As to expression, expression seems restricted to cells of myeloid lineage.

It is found in the cell membrane. This chain is CMRF35-like molecule 5 (CD300LD), found in Homo sapiens (Human).